The following is a 94-amino-acid chain: Prepro-gonadotropin-releasing hormone-like protein (94 aa).

The first 21 residues, 1 to 21 (MNACILLTTLVTMITIEKVQG), serve as a signal peptide directing secretion.

The protein localises to the secreted. Neuropeptide involved in reproduction. May be an important hormone in the regulation of gonadal maturation. The polypeptide is Prepro-gonadotropin-releasing hormone-like protein (Ruditapes philippinarum (Japanese carpet shell)).